A 396-amino-acid polypeptide reads, in one-letter code: Phosphoglycerate kinase (396 aa).

Substrate is bound by residues 21–23 (DFN), Arg36, 59–62 (HLGK), Arg119, and Arg156. Residues Lys206, Gly294, Glu325, and 352–355 (GGDS) each bind ATP.

Belongs to the phosphoglycerate kinase family. As to quaternary structure, monomer.

It localises to the cytoplasm. The catalysed reaction is (2R)-3-phosphoglycerate + ATP = (2R)-3-phospho-glyceroyl phosphate + ADP. It functions in the pathway carbohydrate degradation; glycolysis; pyruvate from D-glyceraldehyde 3-phosphate: step 2/5. The chain is Phosphoglycerate kinase from Staphylococcus aureus (strain USA300).